Reading from the N-terminus, the 913-residue chain is Translation initiation factor IF-2 (913 aa).

The tract at residues 1 to 322 (MTDNNDDKTL…QEKFRRSQMQ (322 aa)) is disordered. Residues 60–113 (VQPVVAAPKPAAPAPVAARPQAPQPRIHQPGGQQQRPGSSQSQQRSGSSAPQQR) show a composition bias toward low complexity. A compositionally biased stretch (basic and acidic residues) spans 131–180 (MEARRRALMEAQARDVVEAKQRAEDEARRKVEEEQRIAAEKMEAANRAAE). 3 stretches are compositionally biased toward low complexity: residues 181–195 (EAAA…PAAE), 203–238 (ERPA…AAAP), and 261–277 (PARG…PAAR). Residues 411 to 578 (SRPPVVTIMG…AILLQAEILD (168 aa)) enclose the tr-type G domain. The tract at residues 420–427 (GHVDHGKT) is G1. 420–427 (GHVDHGKT) lines the GTP pocket. Residues 445 to 449 (GITQH) are G2. A G3 region spans residues 466 to 469 (DTPG). Residues 466–470 (DTPGH) and 520–523 (NKID) each bind GTP. The interval 520–523 (NKID) is G4. Residues 556 to 558 (SAK) form a G5 region.

This sequence belongs to the TRAFAC class translation factor GTPase superfamily. Classic translation factor GTPase family. IF-2 subfamily.

The protein localises to the cytoplasm. Its function is as follows. One of the essential components for the initiation of protein synthesis. Protects formylmethionyl-tRNA from spontaneous hydrolysis and promotes its binding to the 30S ribosomal subunits. Also involved in the hydrolysis of GTP during the formation of the 70S ribosomal complex. The polypeptide is Translation initiation factor IF-2 (Agrobacterium fabrum (strain C58 / ATCC 33970) (Agrobacterium tumefaciens (strain C58))).